The sequence spans 138 residues: Putative thioredoxin-like protein 453L (138 aa).

In terms of domain architecture, Thioredoxin spans 3–138 (QQKYFEKPVY…FNNIVNYVMG (136 aa)). Active-site nucleophile residues include Cys-44 and Cys-47. Cys-44 and Cys-47 are disulfide-bonded.

Belongs to the thioredoxin family.

Its function is as follows. Participates in various redox reactions through the reversible oxidation of its active center dithiol to a disulfide and catalyzes dithiol-disulfide exchange reactions. This is Putative thioredoxin-like protein 453L from Acheta domesticus (House cricket).